A 557-amino-acid chain; its full sequence is Potassium-transporting ATPase potassium-binding subunit (557 aa).

A run of 12 helical transmembrane segments spans residues 5–25 (GFLL…PLGS), 63–83 (LSAI…MLLG), 132–152 (GLTV…FALI), 170–190 (LLRI…LFFI), 253–273 (FVQM…FGEV), 283–303 (LLWA…WAEV), 329–349 (VLVS…AVIA), 356–376 (ALGG…FGGV), 379–399 (GLYG…LMIG), 416–436 (LTAL…ALAM), 484–504 (LLAF…MAIA), and 526–546 (LFVG…FIPA).

It belongs to the KdpA family. In terms of assembly, the system is composed of three essential subunits: KdpA, KdpB and KdpC.

Its subcellular location is the cell inner membrane. Part of the high-affinity ATP-driven potassium transport (or Kdp) system, which catalyzes the hydrolysis of ATP coupled with the electrogenic transport of potassium into the cytoplasm. This subunit binds the periplasmic potassium ions and delivers the ions to the membrane domain of KdpB through an intramembrane tunnel. This Escherichia fergusonii (strain ATCC 35469 / DSM 13698 / CCUG 18766 / IAM 14443 / JCM 21226 / LMG 7866 / NBRC 102419 / NCTC 12128 / CDC 0568-73) protein is Potassium-transporting ATPase potassium-binding subunit.